We begin with the raw amino-acid sequence, 143 residues long: Flagellar assembly factor FliW (143 aa).

It belongs to the FliW family. In terms of assembly, interacts with translational regulator CsrA and flagellin(s).

It localises to the cytoplasm. In terms of biological role, acts as an anti-CsrA protein, binds CsrA and prevents it from repressing translation of its target genes, one of which is flagellin. Binds to flagellin and participates in the assembly of the flagellum. The sequence is that of Flagellar assembly factor FliW from Clostridium novyi (strain NT).